We begin with the raw amino-acid sequence, 183 residues long: Large ribosomal subunit protein uL6 (183 aa).

Belongs to the universal ribosomal protein uL6 family. Part of the 50S ribosomal subunit.

Functionally, this protein binds to the 23S rRNA, and is important in its secondary structure. It is located near the subunit interface in the base of the L7/L12 stalk, and near the tRNA binding site of the peptidyltransferase center. The polypeptide is Large ribosomal subunit protein uL6 (Chlamydia trachomatis serovar A (strain ATCC VR-571B / DSM 19440 / HAR-13)).